The sequence spans 478 residues: Protein MAINTENANCE OF MERISTEMS (478 aa).

Residues 459-478 are disordered; the sequence is ASTTNKRKRREEQQQTDWSE. The short motif at 464-468 is the Nuclear localization signal element; that stretch reads KRKRR.

In terms of tissue distribution, expressed in root meristem, root vasculature, shoot apical meristem (SAM), leaf vasculature and ovules.

The protein localises to the nucleus. In terms of biological role, required for the organization of the root apical meristem (RAM) and the shoot apical meristem (SAM). Required to maintain genome stability and cell division activity in meristematic cells. The protein is Protein MAINTENANCE OF MERISTEMS of Arabidopsis thaliana (Mouse-ear cress).